The sequence spans 362 residues: Ferrochelatase (362 aa).

Residues His-228 and Glu-309 each contribute to the Fe cation site.

The protein belongs to the ferrochelatase family.

It is found in the cytoplasm. The catalysed reaction is heme b + 2 H(+) = protoporphyrin IX + Fe(2+). It participates in porphyrin-containing compound metabolism; protoheme biosynthesis; protoheme from protoporphyrin-IX: step 1/1. In terms of biological role, catalyzes the ferrous insertion into protoporphyrin IX. This Bordetella bronchiseptica (strain ATCC BAA-588 / NCTC 13252 / RB50) (Alcaligenes bronchisepticus) protein is Ferrochelatase.